A 469-amino-acid polypeptide reads, in one-letter code: MSFLTVSRLAPKLLNSKNATYFLVAARNASASSTNLKDVLADLIPKEQTRIKNFKQQYGKTNIGQITVDMVYGGMRGMKGLVYETSVLDPEEGIRFRGYSIPECQKLLPKAPGGEEPLPEGLFWLLVTGQVPTEEQVNWVSKEWAKRAALPSHVVTMLDNFPTNLHPMSQFSAAITALNSESSFARAYSEGVHKSKYWEFIYEDSMDLIAKLPCIAAKIYRNLYREGSSIGAIDSNLDWSHNFTNMLGYSEPQFTELMRLYLTIHSDHEGGNVSAHTSHLVGSALSDPYLSFSAAMNGLAGPLHGLANQEVLVWLTALQKELGGEVSDERMRDYIWNTLKSGRVVPGYGHAVLRKTDPRYTCQREFALKHLPNDPMFKLVAQLYKIVPNVLLEQGRAKNPWPNVDAHSGVLLQYYGMTEMNYYTVLFGVSRALGVLAQLVWSRALGFPLERPKSMSSDGLMTLVGAKSG.

Residues 1–30 constitute a mitochondrion transit peptide; it reads MSFLTVSRLAPKLLNSKNATYFLVAARNAS. Residues H304 and H350 contribute to the active site. R359 contacts oxaloacetate. Residue D405 is part of the active site. Residues R431 and R451 each coordinate oxaloacetate.

It belongs to the citrate synthase family. Homodimer.

The protein localises to the mitochondrion matrix. It catalyses the reaction oxaloacetate + acetyl-CoA + H2O = citrate + CoA + H(+). It participates in carbohydrate metabolism; tricarboxylic acid cycle; isocitrate from oxaloacetate: step 1/2. In terms of biological role, key enzyme of the Krebs tricarboxylic acid cycle which catalyzes the synthesis of citrate from acetyl coenzyme A and oxaloacetate. This is Citrate synthase, mitochondrial (cs) from Kajikia audax (Striped marlin).